Reading from the N-terminus, the 391-residue chain is Succinate--CoA ligase [ADP-forming] subunit beta (391 aa).

The region spanning 9 to 245 (KQIFAEYGVP…LSEEDPDEVE (237 aa)) is the ATP-grasp domain. Residues Lys-46, 53–55 (GRG), Glu-99, Ala-102, and Glu-107 each bind ATP. Mg(2+) contacts are provided by Asn-200 and Asp-214. Substrate is bound by residues Asn-265 and 322-324 (GIV).

It belongs to the succinate/malate CoA ligase beta subunit family. In terms of assembly, heterotetramer of two alpha and two beta subunits. The cofactor is Mg(2+).

The catalysed reaction is succinate + ATP + CoA = succinyl-CoA + ADP + phosphate. The enzyme catalyses GTP + succinate + CoA = succinyl-CoA + GDP + phosphate. Its pathway is carbohydrate metabolism; tricarboxylic acid cycle; succinate from succinyl-CoA (ligase route): step 1/1. Functionally, succinyl-CoA synthetase functions in the citric acid cycle (TCA), coupling the hydrolysis of succinyl-CoA to the synthesis of either ATP or GTP and thus represents the only step of substrate-level phosphorylation in the TCA. The beta subunit provides nucleotide specificity of the enzyme and binds the substrate succinate, while the binding sites for coenzyme A and phosphate are found in the alpha subunit. The polypeptide is Succinate--CoA ligase [ADP-forming] subunit beta (Sulfurovum sp. (strain NBC37-1)).